We begin with the raw amino-acid sequence, 1059 residues long: Carbamoyl phosphate synthase large chain (1059 aa).

Positions 1–401 (MPKRTDIHKI…ALLKAVASLE (401 aa)) are carboxyphosphate synthetic domain. ATP is bound by residues arginine 129, arginine 169, glycine 175, glycine 176, lysine 208, isoleucine 210, glutamate 215, glycine 241, isoleucine 242, histidine 243, glutamine 284, and glutamate 298. Positions 133–327 (KELMQELGEP…IAKLAAKIAV (195 aa)) constitute an ATP-grasp 1 domain. Mg(2+) contacts are provided by glutamine 284, glutamate 298, and asparagine 300. Mn(2+) contacts are provided by glutamine 284, glutamate 298, and asparagine 300. An oligomerization domain region spans residues 402-546 (IDQKDLLSKE…YSTYETENES (145 aa)). The segment at 547 to 929 (RRSAKPSVLV…ALYKAFAGAG (383 aa)) is carbamoyl phosphate synthetic domain. One can recognise an ATP-grasp 2 domain in the interval 671 to 861 (DQVIKDLNLR…MAQLATKVIL (191 aa)). Residues arginine 707, alanine 746, leucine 748, glutamate 752, glycine 777, valine 778, histidine 779, serine 780, glutamine 820, and glutamate 832 each contribute to the ATP site. Residues glutamine 820, glutamate 832, and asparagine 834 each contribute to the Mg(2+) site. Mn(2+) contacts are provided by glutamine 820, glutamate 832, and asparagine 834. An MGS-like domain is found at 930–1059 (MEVPDNGAVL…EMTSFKTTEL (130 aa)). The allosteric domain stretch occupies residues 930–1059 (MEVPDNGAVL…EMTSFKTTEL (130 aa)).

It belongs to the CarB family. As to quaternary structure, composed of two chains; the small (or glutamine) chain promotes the hydrolysis of glutamine to ammonia, which is used by the large (or ammonia) chain to synthesize carbamoyl phosphate. Tetramer of heterodimers (alpha,beta)4. It depends on Mg(2+) as a cofactor. Mn(2+) is required as a cofactor.

It carries out the reaction hydrogencarbonate + L-glutamine + 2 ATP + H2O = carbamoyl phosphate + L-glutamate + 2 ADP + phosphate + 2 H(+). It catalyses the reaction hydrogencarbonate + NH4(+) + 2 ATP = carbamoyl phosphate + 2 ADP + phosphate + 2 H(+). It functions in the pathway amino-acid biosynthesis; L-arginine biosynthesis; carbamoyl phosphate from bicarbonate: step 1/1. It participates in pyrimidine metabolism; UMP biosynthesis via de novo pathway; (S)-dihydroorotate from bicarbonate: step 1/3. Large subunit of the glutamine-dependent carbamoyl phosphate synthetase (CPSase). CPSase catalyzes the formation of carbamoyl phosphate from the ammonia moiety of glutamine, carbonate, and phosphate donated by ATP, constituting the first step of 2 biosynthetic pathways, one leading to arginine and/or urea and the other to pyrimidine nucleotides. The large subunit (synthetase) binds the substrates ammonia (free or transferred from glutamine from the small subunit), hydrogencarbonate and ATP and carries out an ATP-coupled ligase reaction, activating hydrogencarbonate by forming carboxy phosphate which reacts with ammonia to form carbamoyl phosphate. The polypeptide is Carbamoyl phosphate synthase large chain (Limosilactobacillus fermentum (strain NBRC 3956 / LMG 18251) (Lactobacillus fermentum)).